The sequence spans 267 residues: Aspartate/glutamate leucyltransferase (267 aa).

The interval 246 to 267 is disordered; sequence EQEEQTRPLFRPSATGFSTGQE.

Belongs to the R-transferase family. Bpt subfamily.

The protein resides in the cytoplasm. It catalyses the reaction N-terminal L-glutamyl-[protein] + L-leucyl-tRNA(Leu) = N-terminal L-leucyl-L-glutamyl-[protein] + tRNA(Leu) + H(+). The enzyme catalyses N-terminal L-aspartyl-[protein] + L-leucyl-tRNA(Leu) = N-terminal L-leucyl-L-aspartyl-[protein] + tRNA(Leu) + H(+). In terms of biological role, functions in the N-end rule pathway of protein degradation where it conjugates Leu from its aminoacyl-tRNA to the N-termini of proteins containing an N-terminal aspartate or glutamate. The chain is Aspartate/glutamate leucyltransferase from Granulibacter bethesdensis (strain ATCC BAA-1260 / CGDNIH1).